The chain runs to 4660 residues: Low-density lipoprotein receptor-related protein 2 (4660 aa).

The signal sequence occupies residues 1–25; sequence MERGAAAAAWMLLLAIAACLAPVSG. Residues 26–4425 lie on the Extracellular side of the membrane; that stretch reads QECGSGNFRC…LSRGIPPGTT (4400 aa). 7 consecutive LDL-receptor class A domains span residues 27–63, 66–104, 107–143, 146–180, 182–218, 221–257, and 264–307; these read ECGS…IGCP, SCGS…QNCP, TCSS…RNCY, TCDQ…ANCT, LCSQ…HNCN, TCGG…DGCE, and TCYP…RYCG. Intrachain disulfides connect Cys-28–Cys-40, Cys-35–Cys-53, Cys-47–Cys-62, Cys-67–Cys-80, Cys-74–Cys-93, Cys-87–Cys-103, Cys-108–Cys-120, Cys-115–Cys-133, Cys-127–Cys-142, Cys-147–Cys-157, Cys-152–Cys-170, Cys-164–Cys-179, Cys-183–Cys-195, Cys-190–Cys-208, Cys-202–Cys-217, Cys-222–Cys-234, Cys-229–Cys-247, Cys-241–Cys-256, Cys-265–Cys-278, Cys-272–Cys-291, and Cys-285–Cys-306. Residues Asn-159 and Asn-178 are each glycosylated (N-linked (GlcNAc...) asparagine). Residues Asn-299, Asn-340, Asn-387, and Asn-462 are each glycosylated (N-linked (GlcNAc...) asparagine). 4 LDL-receptor class B repeats span residues 435–477, 478–520, 521–567, and 568–612; these read HRVF…DWIN, NKLY…DPTV, GYLF…DLVS, and KRVY…FEEH. Asn-657 carries an N-linked (GlcNAc...) asparagine glycan. LDL-receptor class B repeat units lie at residues 752 to 794, 795 to 836, 837 to 880, and 881 to 924; these read STIF…DWIS, RNLY…HPAA, GYMF…DWST, and SRLY…FKDN. Asn-865 carries N-linked (GlcNAc...) asparagine glycosylation. The 37-residue stretch at 1024 to 1060 folds into the LDL-receptor class A 8 domain; it reads QCGSSSFPCNNGKCVPSIFRCDGVDDCHDNSDEHQCG. 3 cysteine pairs are disulfide-bonded: Cys-1025–Cys-1037, Cys-1032–Cys-1050, and Cys-1044–Cys-1059. Asn-1063 carries an N-linked (GlcNAc...) asparagine glycan. 7 LDL-receptor class A domains span residues 1065–1102, 1109–1145, 1149–1185, 1187–1224, 1230–1268, 1271–1307, and 1312–1350; these read TCSS…QNCP, TCPP…KNCQ, TCHP…AGCV, NCTS…AGCP, MCHP…NGCV, TCSP…KDCP, and HCPS…PLCN. 9 disulfides stabilise this stretch: Cys-1066/Cys-1079, Cys-1073/Cys-1092, Cys-1086/Cys-1101, Cys-1110/Cys-1122, Cys-1117/Cys-1135, Cys-1129/Cys-1144, Cys-1150/Cys-1162, Cys-1157/Cys-1175, and Cys-1169/Cys-1184. Residues Trp-1127, Asp-1130, Asp-1132, Asp-1134, Asp-1140, and Glu-1141 each contribute to the Ca(2+) site. N-linked (GlcNAc...) asparagine glycosylation occurs at Asn-1187. 18 disulfide bridges follow: Cys-1188/Cys-1201, Cys-1195/Cys-1214, Cys-1208/Cys-1223, Cys-1231/Cys-1244, Cys-1238/Cys-1257, Cys-1251/Cys-1267, Cys-1272/Cys-1284, Cys-1279/Cys-1297, Cys-1291/Cys-1306, Cys-1313/Cys-1326, Cys-1320/Cys-1339, Cys-1333/Cys-1349, Cys-1354/Cys-1365, Cys-1361/Cys-1374, Cys-1376/Cys-1389, Cys-1395/Cys-1405, Cys-1401/Cys-1414, and Cys-1416/Cys-1429. Ca(2+) contacts are provided by Tyr-1206, Asp-1209, Val-1211, Asp-1213, Asp-1219, and Glu-1220. N-linked (GlcNAc...) asparagine glycosylation is found at Asn-1328 and Asn-1341. In terms of domain architecture, EGF-like 1 spans 1350-1390; that stretch reads NQDSCLHFNGGCTHRCIQGPFGATCVCPIGYQLANDTKTCE. N-linked (GlcNAc...) asparagine glycosylation is present at Asn-1384. The EGF-like 2; calcium-binding domain maps to 1391 to 1430; the sequence is DVNECDIPGFCSQHCVNMRGSFRCACDPEYTLESDGRTCK. Residues Asn-1451, Asn-1497, and Asn-1551 are each glycosylated (N-linked (GlcNAc...) asparagine). 5 LDL-receptor class B repeats span residues 1479 to 1521, 1522 to 1564, 1567 to 1610, 1611 to 1655, and 1656 to 1696; these read GRVF…DWIG, RNIY…DPRM, NVMF…DYPN, RLIY…FEDS, and VFWT…IHPS. Residues Asn-1676, Asn-1733, and Asn-1811 are each glycosylated (N-linked (GlcNAc...) asparagine). 10 LDL-receptor class B repeats span residues 1791-1833, 1834-1883, 1884-1931, 1932-1973, 1974-2014, 2108-2157, 2158-2202, 2203-2246, 2247-2290, and 2291-2333; these read QFIY…DWVS, RNIY…DPAR, GKLY…DIQE, QKLY…HGSF, LYYS…YHHR, GFIY…DWVA, GNLY…DPKH, RYLF…DHDT, GYIY…FGES, and IIWV…FDEH. N-linked (GlcNAc...) asparagine glycans are attached at residues Asn-2131, Asn-2134, Asn-2178, and Asn-2225. Asn-2396 carries N-linked (GlcNAc...) asparagine glycosylation. LDL-receptor class B repeat units follow at residues 2432-2478, 2479-2519, 2520-2563, 2564-2605, and 2606-2647; these read NRIF…DWIN, RRIY…DPCR, GYMY…DLET, DLLY…YGQY, and IYWT…VVKT. Residues Asn-2488 and Asn-2548 are each glycosylated (N-linked (GlcNAc...) asparagine). 10 consecutive LDL-receptor class A domains span residues 2700–2738, 2741–2777, 2780–2819, 2822–2861, 2864–2902, 2907–2946, 2949–2991, 2994–3030, 3033–3071, and 3076–3112; these read RCNQ…TVCA, TCRS…AGCL, SCNS…KNCP, TCQP…IYCA, TCRS…DTCG, SCSA…HHCE, NCSS…QNCT, ACST…RGCS, PCRD…HLCH, and TCPP…KGCG. 18 cysteine pairs are disulfide-bonded: Cys-2701–Cys-2713, Cys-2708–Cys-2726, Cys-2720–Cys-2737, Cys-2742–Cys-2754, Cys-2749–Cys-2767, Cys-2761–Cys-2776, Cys-2781–Cys-2794, Cys-2789–Cys-2807, Cys-2801–Cys-2818, Cys-2823–Cys-2836, Cys-2830–Cys-2849, Cys-2843–Cys-2860, Cys-2865–Cys-2878, Cys-2872–Cys-2891, Cys-2885–Cys-2901, Cys-2908–Cys-2920, Cys-2915–Cys-2933, and Cys-2927–Cys-2945. An N-linked (GlcNAc...) asparagine glycan is attached at Asn-2782. N-linked (GlcNAc...) asparagine glycosylation occurs at Asn-2810. Residue Asn-2949 is glycosylated (N-linked (GlcNAc...) asparagine). Disulfide bonds link Cys-2950/Cys-2967, Cys-2957/Cys-2980, Cys-2974/Cys-2990, Cys-2995/Cys-3007, Cys-3002/Cys-3020, Cys-3014/Cys-3029, Cys-3034/Cys-3046, Cys-3041/Cys-3059, Cys-3053/Cys-3070, Cys-3077/Cys-3089, Cys-3084/Cys-3102, Cys-3096/Cys-3111, Cys-3116/Cys-3128, Cys-3124/Cys-3137, Cys-3139/Cys-3152, Cys-3158/Cys-3169, Cys-3165/Cys-3178, and Cys-3180/Cys-3193. The N-linked (GlcNAc...) asparagine glycan is linked to Asn-2989. The 42-residue stretch at 3112–3153 folds into the EGF-like 3 domain; sequence GINECQDSSISHCDHNCTDTITSFYCSCLPGYKLMSDKRTCV. A glycan (N-linked (GlcNAc...) asparagine) is linked at Asn-3127. The 41-residue stretch at 3154–3194 folds into the EGF-like 4; calcium-binding domain; it reads DIDECKETPQLCSQKCENVIGSYICKCAPGYIREPDGKSCR. 4 N-linked (GlcNAc...) asparagine glycosylation sites follow: Asn-3213, Asn-3259, Asn-3317, and Asn-3357. 5 LDL-receptor class B repeats span residues 3241–3283, 3284–3326, 3335–3378, 3379–3421, and 3422–3462; these read ERLY…DWVS, RKLY…ENPR, GYVY…DYTN, DLLY…FEDT, and VFWT…LHPY. The N-linked (GlcNAc...) asparagine glycan is linked to Asn-3448. LDL-receptor class A domains follow at residues 3513–3551, 3554–3592, 3595–3633, 3636–3674, 3679–3717, 3720–3757, 3760–3796, and 3799–3835; these read MCSS…DLCP, FCRL…VLCE, RCEA…SHCA, TCRP…HECM, NCDN…QGCE, PCHP…ESCV, ECTE…RDCE, and TCHP…SACP. Cystine bridges form between Cys-3514-Cys-3527, Cys-3521-Cys-3540, Cys-3534-Cys-3550, Cys-3555-Cys-3567, Cys-3562-Cys-3580, Cys-3574-Cys-3591, Cys-3596-Cys-3608, Cys-3603-Cys-3621, Cys-3615-Cys-3632, Cys-3637-Cys-3649, Cys-3644-Cys-3662, Cys-3656-Cys-3673, Cys-3680-Cys-3694, Cys-3688-Cys-3707, Cys-3701-Cys-3716, Cys-3721-Cys-3734, Cys-3729-Cys-3747, Cys-3741-Cys-3756, Cys-3761-Cys-3773, Cys-3768-Cys-3786, Cys-3780-Cys-3795, Cys-3800-Cys-3812, Cys-3807-Cys-3825, and Cys-3819-Cys-3834. Asn-3566 is a glycosylation site (N-linked (GlcNAc...) asparagine). An N-linked (GlcNAc...) asparagine glycan is attached at Asn-3682. N-linked (GlcNAc...) asparagine glycosylation occurs at Asn-3840. 3 LDL-receptor class A domains span residues 3843–3881, 3884–3923, and 3929–3965; these read YCPA…HLCF, PCES…EHCR, and PCTD…TGCN. 9 cysteine pairs are disulfide-bonded: Cys-3844/Cys-3856, Cys-3851/Cys-3869, Cys-3863/Cys-3880, Cys-3885/Cys-3898, Cys-3893/Cys-3911, Cys-3905/Cys-3922, Cys-3930/Cys-3942, Cys-3937/Cys-3955, and Cys-3949/Cys-3964. Residues Asn-3969 and Asn-3980 are each glycosylated (N-linked (GlcNAc...) asparagine). In terms of domain architecture, EGF-like 5; calcium-binding spans 4009–4050; it reads DINECEEFGICPQSCRNSKGSYECFCVDGFKSMSTHYGERCA. 3 cysteine pairs are disulfide-bonded: Cys-4013/Cys-4023, Cys-4019/Cys-4032, and Cys-4034/Cys-4049. N-linked (GlcNAc...) asparagine glycosylation occurs at Asn-4070. 3 LDL-receptor class B repeats span residues 4156–4198, 4199–4242, and 4244–4285; these read RHIY…NPKL, GLMF…DYLN, and DRIY…FEDQ. An N-linked (GlcNAc...) asparagine glycan is attached at Asn-4329. An EGF-like 6 domain is found at 4379–4413; the sequence is MPSPCRCMHGGSCYFDENDLPKCKCSSGYSGEYCE. Intrachain disulfides connect Cys-4383-Cys-4391, Cys-4385-Cys-4401, and Cys-4403-Cys-4412. Residues 4426 to 4446 form a helical membrane-spanning segment; sequence MALLLTFAMVIIVGALVLVGF. Topologically, residues 4447-4660 are cytoplasmic; sequence FHYRKTGSLL…ANLVKEDSDV (214 aa). The SH3-binding motif lies at 4454–4463; sequence SLLPSLPKLP. Positions 4457 to 4462 match the PxLPxI/L motif 1; mediates interaction with ANKRA2 motif; that stretch reads PSLPKL. Residues 4460–4465 carry the PxLPxI/L motif 2; mediates interaction with ANKRA2 motif; sequence PKLPSL. A phosphoserine mark is found at Ser-4464 and Ser-4467. The Endocytosis signal signature appears at 4522–4527; that stretch reads FENPMY. A disordered region spans residues 4558 to 4660; sequence QNYGRSIDPS…ANLVKEDSDV (103 aa). Ser-4577 is modified (phosphoserine). The interval 4597 to 4610 is interaction with DAB2; sequence QTTNFENPIYAEMD. The short motif at 4603 to 4606 is the NPXY motif element; sequence NPIY. An SH2-binding motif is present at residues 4606 to 4609; sequence YAEM. The short motif at 4619–4630 is the SH3-binding element; sequence VAPPPSPSLPAK. Ser-4624 is modified (phosphoserine). Positions 4627 to 4636 are enriched in low complexity; that stretch reads LPAKASKRSS. Phosphothreonine is present on Thr-4637. Ser-4658 bears the Phosphoserine mark.

It belongs to the LDLR family. In terms of assembly, binds plasminogen, extracellular matrix components, plasminogen activator-plasminogen activator inhibitor type I complex, apolipoprotein E-enriched beta-VLDL, lipoprotein lipase, lactoferrin, CLU/clusterin and calcium. Forms a multimeric complex together with LRPAP1. Interacts (via PxLPxI/L motif) with ANKRA2 (via ankyrin repeats). Interacts with LRP2BP. Interacts (via NPXY motif) with DAB2; the interaction is not affected by tyrosine phosphorylation of the NPXY motif. Interacts with MB. Interacts with BMP4. Interacts with the Sonic hedgehog protein N-product which is the active product of SHH. Interacts with CST3 in a calcium-dependent manner. Interacts with the vitamin-D binding protein GC/DBP. Interacts with sex hormone-binding protein SHBG. Interacts with angiotensin-2. Also interacts with angiotensin 1-7. Interacts with APOM. Interacts with selenoprotein SEPP1. Interacts with LEP. Interacts with ALB. Interacts with the antiapoptotic protein BIRC5/survivin. Interacts with matrix metalloproteinase MMP2 in complex with metalloproteinase inhibitor TIMP1. In neurons, forms a trimeric complex with APP and APPB1/FE65. Interacts with LDLRAP1/ARH; mediates trafficking of LRP2 to the endocytic recycling compartment. Does not interact with beta-amyloid protein 40 alone but interacts with the complex composed of beta-amyloid protein 40 and CLU/APOJ. Interacts with MDK. In terms of processing, a fraction undergoes proteolytic cleavage of the extracellular domain at the cell membrane to generate a cytoplasmic tail fragment. This is internalized into the early endosome from where it trafficks in an LDLRAP1/ARH-dependent manner to the endocytic recycling compartment (ERC). In the ERC, it is further cleaved by gamma-secretase to release a fragment which translocates to the nucleus and mediates transcriptional repression. N-glycosylation is required for ligand binding. Contains core-fucosylated N-glycans in kidney proximal convoluted tubules (PCTs) and hybrid-type N-glycans in proximal straight tubules (PSTs). Interacts with ligands in a glycoform-dependent manner. Retinol-binding protein and the vitamin D carrier GC/DBP are endocytosed primarily by PCTs, albumin is endocytosed equally by PCTs and PSTs, and the aminoglycoside kanamycin is endocytosed primarily by PSTs. In terms of tissue distribution, in the inner ear, strongly expressed in the marginal cells of the stria vascularis (at protein level). In the female reproductive tract, expressed on the luminal side of the uterine epithelium (at protein level). In the adult brain, expressed in ependymal cells of the lateral ventricles where expression is restricted to the ependyma that faces the stem cell niche (at protein level). Expressed in neurons throughout the brain including in the hippocampus, limbic cortices and cerebellum (at protein level). In the developing optic nerve, expressed exclusively in astrocytes at 14.5 dpc, 16.5 dpc and 18.5 dpc (at protein level).

The protein localises to the apical cell membrane. The protein resides in the endosome lumen. Its subcellular location is the membrane. It is found in the coated pit. It localises to the cell projection. The protein localises to the dendrite. The protein resides in the axon. Its function is as follows. Multiligand endocytic receptor. Acts together with CUBN to mediate endocytosis of high-density lipoproteins. Mediates receptor-mediated uptake of polybasic drugs such as aprotinin, aminoglycosides and polymyxin B. In the kidney, mediates the tubular uptake and clearance of leptin. Also mediates transport of leptin across the blood-brain barrier through endocytosis at the choroid plexus epithelium. Endocytosis of leptin in neuronal cells is required for hypothalamic leptin signaling and leptin-mediated regulation of feeding and body weight. Mediates endocytosis and subsequent lysosomal degradation of CST3 in kidney proximal tubule cells. Mediates renal uptake of 25-hydroxyvitamin D3 in complex with the vitamin D3 transporter GC/DBP. Mediates renal uptake of metallothionein-bound heavy metals. Together with CUBN, mediates renal reabsorption of myoglobin. Mediates renal uptake and subsequent lysosomal degradation of APOM. Plays a role in kidney selenium homeostasis by mediating renal endocytosis of selenoprotein SEPP1. Mediates renal uptake of the antiapoptotic protein BIRC5/survivin which may be important for functional integrity of the kidney. Mediates renal uptake of matrix metalloproteinase MMP2 in complex with metalloproteinase inhibitor TIMP1. Mediates endocytosis of Sonic hedgehog protein N-product (ShhN), the active product of SHH. Also mediates ShhN transcytosis. In the embryonic neuroepithelium, mediates endocytic uptake and degradation of BMP4, is required for correct SHH localization in the ventral neural tube and plays a role in patterning of the ventral telencephalon. Required at the onset of neurulation to sequester SHH on the apical surface of neuroepithelial cells of the rostral diencephalon ventral midline and to control PTCH1-dependent uptake and intracellular trafficking of SHH. During neurulation, required in neuroepithelial cells for uptake of folate bound to the folate receptor FOLR1 which is necessary for neural tube closure. In the adult brain, negatively regulates BMP signaling in the subependymal zone which enables neurogenesis to proceed. In astrocytes, mediates endocytosis of ALB which is required for the synthesis of the neurotrophic factor oleic acid. Involved in neurite branching. During optic nerve development, required for SHH-mediated migration and proliferation of oligodendrocyte precursor cells. Mediates endocytic uptake and clearance of SHH in the retinal margin which protects retinal progenitor cells from mitogenic stimuli and keeps them quiescent. Plays a role in reproductive organ development by mediating uptake in reproductive tissues of androgen and estrogen bound to the sex hormone binding protein SHBG. Mediates endocytosis of angiotensin-2. Also mediates endocytosis of angiotensin 1-7. Binds to the complex composed of beta-amyloid protein 40 and CLU/APOJ and mediates its endocytosis and lysosomal degradation. Required for embryonic heart development. Required for normal hearing, possibly through interaction with estrogen in the inner ear. This chain is Low-density lipoprotein receptor-related protein 2 (Lrp2), found in Mus musculus (Mouse).